Consider the following 487-residue polypeptide: Glutamyl-tRNA(Gln) amidotransferase subunit A (487 aa).

Active-site charge relay system residues include K79 and S158. S182 acts as the Acyl-ester intermediate in catalysis.

The protein belongs to the amidase family. GatA subfamily. As to quaternary structure, heterotrimer of A, B and C subunits.

It carries out the reaction L-glutamyl-tRNA(Gln) + L-glutamine + ATP + H2O = L-glutaminyl-tRNA(Gln) + L-glutamate + ADP + phosphate + H(+). Allows the formation of correctly charged Gln-tRNA(Gln) through the transamidation of misacylated Glu-tRNA(Gln) in organisms which lack glutaminyl-tRNA synthetase. The reaction takes place in the presence of glutamine and ATP through an activated gamma-phospho-Glu-tRNA(Gln). The sequence is that of Glutamyl-tRNA(Gln) amidotransferase subunit A from Ehrlichia canis (strain Jake).